The primary structure comprises 433 residues: Sensor protein RstB (433 aa).

Topologically, residues 1-3 are cytoplasmic; the sequence is MKK. The helical transmembrane segment at 4 to 24 threads the bilayer; it reads LFIQFYLLLFVCFLVMSLLVG. Residues 25–135 lie on the Periplasmic side of the membrane; that stretch reads LVYKFTAERA…PYLYYLHQMR (111 aa). Residues 136 to 156 form a helical membrane-spanning segment; that stretch reads LLDIALIAFIAISLAFPVFIW. Residues 157-433 lie on the Cytoplasmic side of the membrane; the sequence is MRPHWQDMLK…WHNIPQFTSA (277 aa). The HAMP domain maps to 158–210; sequence RPHWQDMLKLEAAAQRFGDGHLNERIHFDEGSSFERLGVAFNQMADNINALIA. The 208-residue stretch at 218–425 folds into the Histidine kinase domain; that stretch reads GIAHELRTPL…RFSFSWPLWH (208 aa). A Phosphohistidine; by autocatalysis modification is found at H276.

Post-translationally, autophosphorylated.

Its subcellular location is the cell inner membrane. It catalyses the reaction ATP + protein L-histidine = ADP + protein N-phospho-L-histidine.. Functionally, member of the two-component regulatory system RstB/RstA. RstB functions as a membrane-associated protein kinase that phosphorylates RstA. This is Sensor protein RstB (rstB) from Escherichia coli (strain K12).